A 309-amino-acid chain; its full sequence is Tagatose-6-phosphate kinase (309 aa).

This sequence belongs to the carbohydrate kinase PfkB family. LacC subfamily.

It carries out the reaction D-tagatofuranose 6-phosphate + ATP = D-tagatofuranose 1,6-bisphosphate + ADP + H(+). The protein operates within carbohydrate metabolism; D-tagatose 6-phosphate degradation; D-glyceraldehyde 3-phosphate and glycerone phosphate from D-tagatose 6-phosphate: step 1/2. In Streptococcus sanguinis (strain SK36), this protein is Tagatose-6-phosphate kinase.